The following is a 600-amino-acid chain: Elongation factor 4 (600 aa).

The tr-type G domain occupies 4 to 186 (SKIRNFSIIA…EIVKKIPAPQ (183 aa)). Residues 16-21 (DHGKST) and 133-136 (NKID) each bind GTP.

Belongs to the TRAFAC class translation factor GTPase superfamily. Classic translation factor GTPase family. LepA subfamily.

It is found in the cell inner membrane. It catalyses the reaction GTP + H2O = GDP + phosphate + H(+). Its function is as follows. Required for accurate and efficient protein synthesis under certain stress conditions. May act as a fidelity factor of the translation reaction, by catalyzing a one-codon backward translocation of tRNAs on improperly translocated ribosomes. Back-translocation proceeds from a post-translocation (POST) complex to a pre-translocation (PRE) complex, thus giving elongation factor G a second chance to translocate the tRNAs correctly. Binds to ribosomes in a GTP-dependent manner. The chain is Elongation factor 4 from Trichlorobacter lovleyi (strain ATCC BAA-1151 / DSM 17278 / SZ) (Geobacter lovleyi).